Here is a 267-residue protein sequence, read N- to C-terminus: Putative glycosyltransferase 63 (267 aa).

This sequence belongs to the glycosyltransferase group 1 family. Glycosyltransferase 4 subfamily.

The polypeptide is Putative glycosyltransferase 63 (SIFV0063) (Sulfolobus islandicus filamentous virus (isolate Iceland/Hveragerdi) (SIFV)).